The sequence spans 282 residues: Probable endonuclease 4 (282 aa).

The Zn(2+) site is built by histidine 66, histidine 106, glutamate 143, aspartate 177, histidine 180, histidine 214, aspartate 227, histidine 229, and glutamate 259.

It belongs to the AP endonuclease 2 family. It depends on Zn(2+) as a cofactor.

The catalysed reaction is Endonucleolytic cleavage to 5'-phosphooligonucleotide end-products.. Functionally, endonuclease IV plays a role in DNA repair. It cleaves phosphodiester bonds at apurinic or apyrimidinic (AP) sites, generating a 3'-hydroxyl group and a 5'-terminal sugar phosphate. The chain is Probable endonuclease 4 from Nitratidesulfovibrio vulgaris (strain ATCC 29579 / DSM 644 / CCUG 34227 / NCIMB 8303 / VKM B-1760 / Hildenborough) (Desulfovibrio vulgaris).